Reading from the N-terminus, the 387-residue chain is MNAKTDFSGYEVGYDIPALPGMDESEIQTPCLILDLDALERNIRKMGDYAKAHGMRHRSHGKMHKSVDVQKLQESLGGSVGVCCQKVSEAEAFARGGIKDVLVTNEVREPAKIDRLARLPKTGATVTVCVDDVQNIADLSAAAQKHGTELGIFVEIDCGAGRCGVTTKEAVVEIAKAAAAAPNLTFKGIQAYQGRDAAHGQLRGPQGQAGRRHCPGERGRGRAGGRGLAPEFVSGGGTGSYYFESNSGIYNELQCGSYAFMDADYGRIHDAEGKRIDQGEWENALFILTSVMSHAKPHLAVVDAGLKAQSVDSGLPFVYGRDDVKYIKCSDEHGVVEDKDGVLKVNDKLRLVPGHCDPTCNVHDWYVGVRNGKVETVWPVSARGKGY.

N6-(pyridoxal phosphate)lysine is present on Lys-62. Gln-85 serves as a coordination point for pyridoxal 5'-phosphate. The interval 199–228 (HGQLRGPQGQAGRRHCPGERGRGRAGGRGL) is disordered. Residues Thr-238, 256–257 (GS), and Tyr-265 contribute to the pyridoxal 5'-phosphate site. Mg(2+) is bound by residues His-355 and Asp-357.

It belongs to the DSD1 family. Homodimer. It depends on pyridoxal 5'-phosphate as a cofactor. Mn(2+) is required as a cofactor. Mg(2+) serves as cofactor. Requires Co(2+) as cofactor.

It catalyses the reaction (3S)-3-hydroxy-D-aspartate = glyoxylate + glycine. It carries out the reaction (3R)-3-hydroxy-D-aspartate = glyoxylate + glycine. Its function is as follows. Catalyzes the condensation of glyoxylate and glycine into (2R,3S)-beta-hydroxyaspartate ((3S)-3-hydroxy-D-aspartate). Functions in glyoxylate assimilation via the beta-hydroxyaspartate cycle (BHAC). In vitro catalyzes the cleavage of both D-erythro- and D-threo-3-hydroxyaspartate to glycine and glyoxylate. Also acts on D-threonine, D-3-phenylserine and D-3-3,4-methylenedioxyphenylserine. This Paracoccus denitrificans protein is 3-hydroxy-D-aspartate aldolase (dhaa).